Reading from the N-terminus, the 225-residue chain is Guanylate kinase (225 aa).

The region spanning 20 to 198 (GNLFMVVAPS…ALSELQCLVA (179 aa)) is the Guanylate kinase-like domain. Residue 27–34 (APSGAGKS) coordinates ATP.

The protein belongs to the guanylate kinase family.

The protein resides in the cytoplasm. The enzyme catalyses GMP + ATP = GDP + ADP. Its function is as follows. Essential for recycling GMP and indirectly, cGMP. The protein is Guanylate kinase of Paraburkholderia xenovorans (strain LB400).